Here is a 285-residue protein sequence, read N- to C-terminus: Acetyl-coenzyme A carboxylase carboxyl transferase subunit beta (285 aa).

Residues 22 to 285 enclose the CoA carboxyltransferase N-terminal domain; the sequence is LWTKCEACGA…HPGVAYAPGV (264 aa). Residues Cys26, Cys29, Cys45, and Cys48 each coordinate Zn(2+). A C4-type zinc finger spans residues 26–48; the sequence is CEACGAQIYKKEFQENLHVCPKC.

It belongs to the AccD/PCCB family. Acetyl-CoA carboxylase is a heterohexamer composed of biotin carboxyl carrier protein (AccB), biotin carboxylase (AccC) and two subunits each of ACCase subunit alpha (AccA) and ACCase subunit beta (AccD). It depends on Zn(2+) as a cofactor.

It localises to the cytoplasm. It carries out the reaction N(6)-carboxybiotinyl-L-lysyl-[protein] + acetyl-CoA = N(6)-biotinyl-L-lysyl-[protein] + malonyl-CoA. It participates in lipid metabolism; malonyl-CoA biosynthesis; malonyl-CoA from acetyl-CoA: step 1/1. Its function is as follows. Component of the acetyl coenzyme A carboxylase (ACC) complex. Biotin carboxylase (BC) catalyzes the carboxylation of biotin on its carrier protein (BCCP) and then the CO(2) group is transferred by the transcarboxylase to acetyl-CoA to form malonyl-CoA. This chain is Acetyl-coenzyme A carboxylase carboxyl transferase subunit beta, found in Thermus thermophilus (strain ATCC BAA-163 / DSM 7039 / HB27).